An 861-amino-acid chain; its full sequence is Ataxin-7-like protein 1 (861 aa).

Disordered stretches follow at residues 1–31, 154–189, 342–448, 606–673, and 772–861; these read MTSERSRIPCLSAAAAEGTGKKQQEGRAMAT, GHHSASSTSKPFKTPKDNLLTSSSKQHTVFPAKGSR, KSRE…GADE, PIPA…LSGP, and FDKS…RTLP. The SCA7 domain maps to 284 to 351; that stretch reads RRLSEREFDP…KSREKEVKDK (68 aa). Residues 342–354 are compositionally biased toward basic and acidic residues; sequence KSREKEVKDKEHL. The segment covering 355 to 369 has biased composition (polar residues); sequence LTSTREILPSQSGPA. Low complexity-rich tracts occupy residues 372 to 381, 403 to 417, and 606 to 616; these read SLLGSSGSSG, SSANSISSSTSSNHS, and PIPAVIPSPSH. Basic residues predominate over residues 617–627; the sequence is KPSKTKTSKSS. Residues 628-641 show a composition bias toward basic and acidic residues; sequence KVKDLSTRSDESPS. Low complexity-rich tracts occupy residues 648-671 and 783-794; these read QSSTSSSSSSSSSSLQTSLSSPLS and SSSSSKACKITK. Over residues 817–828 the composition is skewed to polar residues; the sequence is VNSTSSRQVGKN. Positions 829–847 are enriched in low complexity; it reads SSLALSQSSPSSISSPGHS.

The chain is Ataxin-7-like protein 1 (ATXN7L1) from Homo sapiens (Human).